The chain runs to 414 residues: 3-ketoacyl-CoA thiolase, peroxisomal (414 aa).

The N-terminal 9 residues, 1–9, are a transit peptide targeting the peroxisome; the sequence is MDRLNNLAT. The interval 1–9 is PTS2-type peroxisomal targeting signal; that stretch reads MDRLNNLAT. Residue C115 is the Acyl-thioester intermediate of the active site. Catalysis depends on proton acceptor residues H370 and C400.

The protein belongs to the thiolase-like superfamily. Thiolase family. Homodimer. Interacts (via PTS2-type peroxisomal targeting signal region) with PEX7; leading to its translocation into peroxisomes.

The protein resides in the peroxisome. The catalysed reaction is an acyl-CoA + acetyl-CoA = a 3-oxoacyl-CoA + CoA. It participates in lipid metabolism; fatty acid metabolism. In terms of biological role, responsible for the thiolytic cleavage of straight chain 3-keto fatty acyl-CoAs (3-oxoacyl-CoAs). This is 3-ketoacyl-CoA thiolase, peroxisomal (POT1) from Yarrowia lipolytica (strain CLIB 122 / E 150) (Yeast).